Consider the following 427-residue polypeptide: UDP-N-acetylglucosamine--N-acetylmuramyl-(pentapeptide) pyrophosphoryl-undecaprenol N-acetylglucosamine transferase (427 aa).

Residues 29-31 (TGG), N141, R177, S205, I258, and Q303 each bind UDP-N-acetyl-alpha-D-glucosamine. The interval 408–427 (SLHPIPDSRFPIRTSAGGAQ) is disordered.

Belongs to the glycosyltransferase 28 family. MurG subfamily.

It is found in the cell inner membrane. It catalyses the reaction di-trans,octa-cis-undecaprenyl diphospho-N-acetyl-alpha-D-muramoyl-L-alanyl-D-glutamyl-meso-2,6-diaminopimeloyl-D-alanyl-D-alanine + UDP-N-acetyl-alpha-D-glucosamine = di-trans,octa-cis-undecaprenyl diphospho-[N-acetyl-alpha-D-glucosaminyl-(1-&gt;4)]-N-acetyl-alpha-D-muramoyl-L-alanyl-D-glutamyl-meso-2,6-diaminopimeloyl-D-alanyl-D-alanine + UDP + H(+). It functions in the pathway cell wall biogenesis; peptidoglycan biosynthesis. Functionally, cell wall formation. Catalyzes the transfer of a GlcNAc subunit on undecaprenyl-pyrophosphoryl-MurNAc-pentapeptide (lipid intermediate I) to form undecaprenyl-pyrophosphoryl-MurNAc-(pentapeptide)GlcNAc (lipid intermediate II). This chain is UDP-N-acetylglucosamine--N-acetylmuramyl-(pentapeptide) pyrophosphoryl-undecaprenol N-acetylglucosamine transferase, found in Xanthomonas campestris pv. campestris (strain 8004).